The following is a 333-amino-acid chain: Glyceraldehyde-3-phosphate dehydrogenase 1 (333 aa).

NAD(+) contacts are provided by residues 12 to 13, Asp35, and Arg79; that span reads RI. Residues 152 to 154, Thr183, Arg198, 211 to 212, and Arg234 contribute to the D-glyceraldehyde 3-phosphate site; these read SCT and SG. Cys153 acts as the Nucleophile in catalysis. Asn314 is a binding site for NAD(+).

The protein belongs to the glyceraldehyde-3-phosphate dehydrogenase family. Homotetramer.

Its subcellular location is the cytoplasm. It carries out the reaction D-glyceraldehyde 3-phosphate + phosphate + NAD(+) = (2R)-3-phospho-glyceroyl phosphate + NADH + H(+). The protein operates within carbohydrate degradation; glycolysis; pyruvate from D-glyceraldehyde 3-phosphate: step 1/5. Its activity is regulated as follows. Resistant to pentalenolactone (PL). Catalyzes the oxidative phosphorylation of glyceraldehyde 3-phosphate (G3P) to 1,3-bisphosphoglycerate (BPG) using the cofactor NAD. The first reaction step involves the formation of a hemiacetal intermediate between G3P and a cysteine residue, and this hemiacetal intermediate is then oxidized to a thioester, with concomitant reduction of NAD to NADH. The reduced NADH is then exchanged with the second NAD, and the thioester is attacked by a nucleophilic inorganic phosphate to produce BPG. This is Glyceraldehyde-3-phosphate dehydrogenase 1 (gap1) from Streptomyces arenae.